Consider the following 349-residue polypeptide: Small ribosomal subunit biogenesis GTPase RsgA 2 (349 aa).

Residues 97–252 enclose the CP-type G domain; it reads AEQLIATNVD…IIDTPGMREL (156 aa). GTP-binding positions include 142–145 and 194–202; these read TKAD and GSSGVGKST. C275, C280, H282, and C288 together coordinate Zn(2+).

It belongs to the TRAFAC class YlqF/YawG GTPase family. RsgA subfamily. In terms of assembly, monomer. Associates with 30S ribosomal subunit, binds 16S rRNA. Zn(2+) serves as cofactor.

It localises to the cytoplasm. One of several proteins that assist in the late maturation steps of the functional core of the 30S ribosomal subunit. Helps release RbfA from mature subunits. May play a role in the assembly of ribosomal proteins into the subunit. Circularly permuted GTPase that catalyzes slow GTP hydrolysis, GTPase activity is stimulated by the 30S ribosomal subunit. This is Small ribosomal subunit biogenesis GTPase RsgA 2 from Vibrio vulnificus (strain CMCP6).